Reading from the N-terminus, the 489-residue chain is Transcription factor TGAL11 (489 aa).

Over residues 87–99 (AATATATARPPAT) the composition is skewed to low complexity. The segment at 87 to 181 (AATATATARP…SDHRMTKTLD (95 aa)) is disordered. A compositionally biased stretch (polar residues) spans 121 to 139 (SNVTADTTDSESSSKNNGD). A compositionally biased stretch (low complexity) spans 148 to 159 (ASQFDQIPQQQQ). A compositionally biased stretch (basic and acidic residues) spans 171–181 (HSDHRMTKTLD). Residues 181-225 (DPKIMRRLAQNREAARKSRLRKKAYIQQLESSKLRLAQMEQDLER) enclose the bZIP domain. Residues 183-203 (KIMRRLAQNREAARKSRLRKK) form a basic motif region. Residues 209–223 (LESSKLRLAQMEQDL) form a leucine-zipper region. The DOG1 domain occupies 245–460 (AAMFDAEYGR…RALSSLWASR (216 aa)).

The protein belongs to the bZIP family.

It is found in the nucleus. In terms of biological role, transcriptional regulator involved in defense response. The sequence is that of Transcription factor TGAL11 from Oryza sativa subsp. japonica (Rice).